The chain runs to 834 residues: Periplasmic nitrate reductase (834 aa).

The tat-type signal signal peptide spans 1–29 (MNLTRREFAKANAAAIAAAAAGLPILVRA). One can recognise a 4Fe-4S Mo/W bis-MGD-type domain in the interval 41 to 97 (LVWNKAPCRFCGTGCSVMVATRDGQVVATHGDIKAEVNRGINCVKGYFLSKIMYGSD). Residues Cys48, Cys51, Cys55, and Cys83 each coordinate [4Fe-4S] cluster. Mo-bis(molybdopterin guanine dinucleotide) is bound by residues Lys85, Gln152, Asn177, Cys181, 214–221 (WGSNMAEM), 245–249 (STFEH), 264–266 (QTD), Met375, Gln379, Asn485, 511–512 (SD), Lys534, Asp561, and 721–730 (TGRVLEHWHT). Position 797 (Phe797) interacts with substrate. Mo-bis(molybdopterin guanine dinucleotide) contacts are provided by Asn805 and Lys822.

The protein belongs to the prokaryotic molybdopterin-containing oxidoreductase family. NasA/NapA/NarB subfamily. In terms of assembly, component of the periplasmic nitrate reductase NapAB complex composed of NapA and NapB. It depends on [4Fe-4S] cluster as a cofactor. Mo-bis(molybdopterin guanine dinucleotide) serves as cofactor. Predicted to be exported by the Tat system. The position of the signal peptide cleavage has not been experimentally proven.

It is found in the periplasm. It carries out the reaction 2 Fe(II)-[cytochrome] + nitrate + 2 H(+) = 2 Fe(III)-[cytochrome] + nitrite + H2O. Catalytic subunit of the periplasmic nitrate reductase complex NapAB. Receives electrons from NapB and catalyzes the reduction of nitrate to nitrite. The sequence is that of Periplasmic nitrate reductase from Pseudomonas aeruginosa (strain UCBPP-PA14).